The sequence spans 161 residues: Urease accessory protein UreE (161 aa).

The protein belongs to the UreE family.

The protein resides in the cytoplasm. Functionally, involved in urease metallocenter assembly. Binds nickel. Probably functions as a nickel donor during metallocenter assembly. The polypeptide is Urease accessory protein UreE (Arthrobacter sp. (strain FB24)).